The chain runs to 164 residues: Transcriptional repressor NrdR (164 aa).

The segment at 3–34 (CPKCNYNKSSVVDSRQAEDGNTIRRRRECESC) is a zinc-finger region. The ATP-cone domain occupies 49–139 (LLVIKKDGTR…VYKSFKDLDE (91 aa)).

This sequence belongs to the NrdR family. It depends on Zn(2+) as a cofactor.

Negatively regulates transcription of bacterial ribonucleotide reductase nrd genes and operons by binding to NrdR-boxes. The polypeptide is Transcriptional repressor NrdR (Streptococcus equi subsp. zooepidemicus (strain H70)).